Here is a 421-residue protein sequence, read N- to C-terminus: Phosphatidylinositol 5-phosphate 4-kinase type-2 gamma (421 aa).

N-acetylalanine is present on Ala-2. Ser-26 bears the Phosphoserine mark. In terms of domain architecture, PIPK spans Ala-43–Phe-420. Positions Val-69 to Asp-75 are required for interaction with PIP5K1A. Residue Ser-349 is modified to Phosphoserine.

In terms of assembly, interacts with PIP5K1A; the interaction inhibits PIP5K1A kinase activity. In terms of processing, phosphorylated, phosphorylation is induced by EGF.

Its subcellular location is the endoplasmic reticulum. It is found in the cytoplasm. The catalysed reaction is a 1,2-diacyl-sn-glycero-3-phospho-(1D-myo-inositol-5-phosphate) + ATP = a 1,2-diacyl-sn-glycero-3-phospho-(1D-myo-inositol-4,5-bisphosphate) + ADP + H(+). It carries out the reaction 1,2-dihexadecanoyl-sn-glycero-3-phospho-(1D-myo-inositol-5-phosphate) + ATP = 1,2-dihexadecanoyl-sn-glycero-3-phospho-(1D-myo-inositol-4,5-bisphosphate) + ADP + H(+). The enzyme catalyses 1,2-dihexadecanoyl-sn-glycero-3-phospho-(1D-myo-inositol-5-phosphate) + GTP = 1,2-dihexadecanoyl-sn-glycero-3-phospho-(1D-myo-inositol-4,5-bisphosphate) + GDP + H(+). Its function is as follows. Phosphatidylinositol 5-phosphate 4-kinase with low enzymatic activity. May be a GTP sensor, has higher GTP-dependent kinase activity than ATP-dependent kinase activity. PIP4Ks negatively regulate insulin signaling through a catalytic-independent mechanism. They interact with PIP5Ks and suppress PIP5K-mediated PtdIns(4,5)P2 synthesis and insulin-dependent conversion to PtdIns(3,4,5)P3. The sequence is that of Phosphatidylinositol 5-phosphate 4-kinase type-2 gamma from Homo sapiens (Human).